The chain runs to 431 residues: Enolase (431 aa).

Gln-168 lines the (2R)-2-phosphoglycerate pocket. The Proton donor role is filled by Glu-210. Residues Asp-247, Glu-291, and Asp-318 each contribute to the Mg(2+) site. Residues Lys-343, Arg-372, Ser-373, and Lys-394 each contribute to the (2R)-2-phosphoglycerate site. Lys-343 serves as the catalytic Proton acceptor.

Belongs to the enolase family. As to quaternary structure, component of the RNA degradosome, a multiprotein complex involved in RNA processing and mRNA degradation. The cofactor is Mg(2+).

The protein localises to the cytoplasm. It is found in the secreted. It localises to the cell surface. It catalyses the reaction (2R)-2-phosphoglycerate = phosphoenolpyruvate + H2O. The protein operates within carbohydrate degradation; glycolysis; pyruvate from D-glyceraldehyde 3-phosphate: step 4/5. Catalyzes the reversible conversion of 2-phosphoglycerate (2-PG) into phosphoenolpyruvate (PEP). It is essential for the degradation of carbohydrates via glycolysis. In Acinetobacter baumannii (strain SDF), this protein is Enolase.